Here is a 482-residue protein sequence, read N- to C-terminus: Chromosome stability protein 9 (482 aa).

Disordered regions lie at residues 239 to 263 (SSLR…VNKN) and 418 to 482 (SGLA…RRIR). Over residues 240 to 249 (SLRNSSKNNN) the composition is skewed to low complexity. A compositionally biased stretch (polar residues) spans 250-263 (GTVTPSTSGRVNKN). The span at 418 to 437 (SGLAFSSSSNSLQQSKLPKS) shows a compositional bias: low complexity. Composition is skewed to polar residues over residues 440-453 (LKRS…TNTH) and 463-473 (RSSNTVLGSSK).

Component of the synapsis initiation complex composed of at least ZIP2, ZIP3, MSH4 and MSH5. Also interacts with ZIP1, MRE11, RAD51 and RAD53.

It localises to the nucleus. The protein localises to the chromosome. Its function is as follows. Component of the synapsis initiation complex (SIC) necessary for the synaptonemal complex assembly. Stabilizes the ZIP2 component to the chromosomes. The SIC complex loads onto chromosomes and nucleates ZIP1 polymerization, a molecular zipper that acts to bring homologous chromosomes in close apposition, which is required for meiotic crossover. May also be involved in double strand break repair. The protein is Chromosome stability protein 9 (CST9) of Saccharomyces cerevisiae (strain ATCC 204508 / S288c) (Baker's yeast).